The chain runs to 699 residues: Elongation factor G (699 aa).

One can recognise a tr-type G domain in the interval 10–292 (NRTRNIGIMA…AVIDYLPSPT (283 aa)). GTP-binding positions include 19-26 (AHIDAGKT), 90-94 (DTPGH), and 144-147 (NKMD). The disordered stretch occupies residues 292–312 (TDVPAIRGEEDDGSEGSRSAS).

It belongs to the TRAFAC class translation factor GTPase superfamily. Classic translation factor GTPase family. EF-G/EF-2 subfamily.

It localises to the cytoplasm. Functionally, catalyzes the GTP-dependent ribosomal translocation step during translation elongation. During this step, the ribosome changes from the pre-translocational (PRE) to the post-translocational (POST) state as the newly formed A-site-bound peptidyl-tRNA and P-site-bound deacylated tRNA move to the P and E sites, respectively. Catalyzes the coordinated movement of the two tRNA molecules, the mRNA and conformational changes in the ribosome. In Coxiella burnetii (strain RSA 331 / Henzerling II), this protein is Elongation factor G.